The primary structure comprises 651 residues: Beta-glucuronidase (651 aa).

The first 22 residues, 1-22, serve as a signal peptide directing secretion; that stretch reads MARGSAVAWAALGPLLWGCALG. N-linked (GlcNAc...) asparagine glycosylation is found at asparagine 173, asparagine 272, and asparagine 420. Residue glutamate 451 is the Proton donor of the active site. N-linked (GlcNAc...) asparagine glycosylation is present at asparagine 631.

The protein belongs to the glycosyl hydrolase 2 family. In terms of assembly, homotetramer. Post-translationally, N-linked glycosylated with 3 to 4 oligosaccharide chains.

The protein localises to the lysosome. It catalyses the reaction a beta-D-glucuronoside + H2O = D-glucuronate + an alcohol. With respect to regulation, inhibited by L-aspartic acid. In terms of biological role, plays an important role in the degradation of dermatan and keratan sulfates. The chain is Beta-glucuronidase (GUSB) from Homo sapiens (Human).